Reading from the N-terminus, the 318-residue chain is Protoheme IX farnesyltransferase (318 aa).

The next 9 helical transmembrane spans lie at 37-57, 59-79, 108-128, 131-151, 158-178, 183-203, 216-238, 249-269, and 296-316; these read VMEL…RGLP, IWLI…AGAF, EALV…WFGA, LAGL…TLIL, NIVW…AAVT, WPAI…YWPL, VPML…YTWA, LGHA…WFLL, and ISYL…GMPL.

Belongs to the UbiA prenyltransferase family. Protoheme IX farnesyltransferase subfamily.

The protein resides in the cell membrane. The catalysed reaction is heme b + (2E,6E)-farnesyl diphosphate + H2O = Fe(II)-heme o + diphosphate. The protein operates within porphyrin-containing compound metabolism; heme O biosynthesis; heme O from protoheme: step 1/1. Converts heme B (protoheme IX) to heme O by substitution of the vinyl group on carbon 2 of heme B porphyrin ring with a hydroxyethyl farnesyl side group. The polypeptide is Protoheme IX farnesyltransferase (Renibacterium salmoninarum (strain ATCC 33209 / DSM 20767 / JCM 11484 / NBRC 15589 / NCIMB 2235)).